We begin with the raw amino-acid sequence, 221 residues long: tRNA (guanine-N(7)-)-methyltransferase (221 aa).

Residues Glu43, Glu68, and Asp123 each coordinate S-adenosyl-L-methionine. Asp123 is a catalytic residue. Residues Lys127, Asp159, and 199–202 (TEYE) contribute to the substrate site.

The protein belongs to the class I-like SAM-binding methyltransferase superfamily. TrmB family.

It carries out the reaction guanosine(46) in tRNA + S-adenosyl-L-methionine = N(7)-methylguanosine(46) in tRNA + S-adenosyl-L-homocysteine. Its pathway is tRNA modification; N(7)-methylguanine-tRNA biosynthesis. Catalyzes the formation of N(7)-methylguanine at position 46 (m7G46) in tRNA. The sequence is that of tRNA (guanine-N(7)-)-methyltransferase from Mycoplasma mycoides subsp. mycoides SC (strain CCUG 32753 / NCTC 10114 / PG1).